The chain runs to 351 residues: High-affinity nickel transport protein (351 aa).

Topologically, residues 1–19 (MFQLLAGVRMNSTGRPRAK) are cytoplasmic. Residues 20–40 (IILLYALLIAFNIGAWLCALA) form a helical membrane-spanning segment. The Periplasmic portion of the chain corresponds to 41–51 (AFRDHPVLLGT). A helical membrane pass occupies residues 52–72 (ALLAYGLGLRHAVDADHLAAI). The Cytoplasmic portion of the chain corresponds to 73-94 (DNVTRKLMQDGRRPITAGLWFS). Residues 95-115 (LGHSSVVVLASVLIAVMATTL) form a helical membrane-spanning segment. Residues 116 to 128 (QERLDAFHEVGSV) lie on the Periplasmic side of the membrane. The helical transmembrane segment at 129 to 149 (IGTLASALFLFAIAAINLVIL) threads the bilayer. At 150–199 (RSAYRAFRRVRRGGIYVEEDFDLLFGNRGFLARIFRPLFRFITRSWHMYP) the chain is on the cytoplasmic side. A helical transmembrane segment spans residues 200 to 220 (LGMLFALGFDTATEVALLGIS). The Periplasmic portion of the chain corresponds to 221–243 (TMEASRGVPIWSILVFPALFTAG). A helical membrane pass occupies residues 244-264 (MALIDTIDSILMCGAYAWAYA). At 265 to 269 (KPVRK) the chain is on the cytoplasmic side. The chain crosses the membrane as a helical span at residues 270–290 (LYYNMTITFVSAIVALIVGGI). Residues 291-316 (ETLGLLADKFMLKGVFWNAVGALNEN) are Periplasmic-facing. A helical transmembrane segment spans residues 317–337 (FCQLGFVIIGIFTVCWVVSIV). Residues 338–351 (VYRLRRYDDSEVRA) are Cytoplasmic-facing.

This sequence belongs to the NiCoT transporter (TC 2.A.52) family.

Its subcellular location is the cell inner membrane. Functionally, high-affinity nickel transporter responsible for nickel uptake. Necessary for high levels of activity of hydrogenase and urease. Does not transport cobalt. The protein is High-affinity nickel transport protein (hoxN) of Cupriavidus necator (strain ATCC 17699 / DSM 428 / KCTC 22496 / NCIMB 10442 / H16 / Stanier 337) (Ralstonia eutropha).